The following is a 397-amino-acid chain: MAKDVFSVAIFFIVLRETLEASIIVSVLMSFISQTLMDKDGNVTDPKLKRKFMLQVWIGSFTALFICLAIGGGFIGAFYALDKDIWSGSEEIWEGVFSLIAVVLITVMGFAMLRVSHLQEKWRKKLMKSIANRKAKGISNWGKKYSMFLLPFFTVLREGLEVVVFVGGVGLETPATAFPLPVICGLIVGCLIGYFIYRGGNVMNLQWFLIASTCILYLISAGLMSKATFYFEMNKWNHQTGGDAGELGDGPGSYPFKSAVWHVNYGNPEMNSNGGYMIFNAILGWNNTGTYGSILSYIIYWLFVAFIMFLMWYKERRAARLLIAKLGDKVVDLEAASSHTPVQSSSSEDEFKINSPTDDKGDKAIDIVTEVRESSSPVEEHKDDKTVDVINEIRESH.

The next 4 helical transmembrane spans lie at 61 to 81, 92 to 112, 177 to 197, and 292 to 312; these read FTALFICLAIGGGFIGAFYAL, IWEGVFSLIAVVLITVMGFAM, AFPLPVICGLIVGCLIGYFIY, and GSILSYIIYWLFVAFIMFLMW. 2 positions are modified to phosphoserine: Ser-337 and Ser-338. Residues 337 to 346 show a composition bias toward polar residues; the sequence is SSHTPVQSSS. Positions 337-364 are disordered; it reads SSHTPVQSSSSEDEFKINSPTDDKGDKA. Residue Thr-340 is modified to Phosphothreonine. 3 positions are modified to phosphoserine: Ser-346, Ser-347, and Ser-355. A compositionally biased stretch (basic and acidic residues) spans 349-364; the sequence is DEFKINSPTDDKGDKA. The residue at position 357 (Thr-357) is a Phosphothreonine. Phosphoserine occurs at positions 374, 375, and 376.

Belongs to the oxidase-dependent Fe transporter (OFeT) (TC 9.A.10.1) family.

It is found in the membrane. Permease for high affinity iron uptake. The protein is Plasma membrane iron permease (fip1) of Schizosaccharomyces pombe (strain 972 / ATCC 24843) (Fission yeast).